The following is a 489-amino-acid chain: Transmembrane protein 161A (489 aa).

Residues 1–23 form the signal peptide; sequence MAVMGIQMVVTLLVASLMQRVSP. Residues 24–98 lie on the Extracellular side of the membrane; it reads HYSFGRWLLC…INTMDALVLR (75 aa). Residue Asn34 is glycosylated (N-linked (GlcNAc...) asparagine). A helical transmembrane segment spans residues 99–119; it reads YFLEYQWFIDFALYSTIIYLF. Over 120-134 the chain is Cytoplasmic; the sequence is TEAYYCVVDAQNEIN. A helical transmembrane segment spans residues 135 to 155; sequence IGVLWCLMSIIFSIKVLFTVM. Residues 156–166 lie on the Extracellular side of the membrane; the sequence is KHYFRSEEGGE. The helical transmembrane segment at 167-187 threads the bilayer; the sequence is RSVCMTFAFFFLLIAMIVTIV. Residues 188–224 are Cytoplasmic-facing; that stretch reads RDEYLEFGLEPGLASVCHNLENFLAQQGWQWSMPFVK. Residues 225–245 traverse the membrane as a helical segment; sequence LAFKIALVALCAFLGGCLTFP. Topologically, residues 246 to 264 are extracellular; sequence GLRLAQTHLDALKMAADRP. Residues 265–285 form a helical membrane-spanning segment; that stretch reads MLQLLLHMSFLPPVIVVVLWI. The Cytoplasmic portion of the chain corresponds to 286–304; the sequence is RPITRDFLLNAPMGKESVE. The helical transmembrane segment at 305-325 threads the bilayer; that stretch reads LMSNSAYNTFRLWIIVLLCLL. The Extracellular portion of the chain corresponds to 326–370; that stretch reads RFCLTRFHLQAYLCLADRWVEQMKREAGRISMLEIQRKISRIFCY. Residues 371–391 form a helical membrane-spanning segment; the sequence is LTVVALQYLAPVILTFHCVFM. Residues 392-459 lie on the Cytoplasmic side of the membrane; that stretch reads LKSLGDYSWG…GLFTPLFFRG (68 aa). Positions 413–432 are disordered; the sequence is VDSSPVQSHSPTSEEEEDTE. The helical transmembrane segment at 460-480 threads the bilayer; the sequence is IFSFLTWWVSVCQIITSLFGL. At 481–489 the chain is on the extracellular side; that stretch reads YFHQYLGAS.

This sequence belongs to the TMEM161 family.

It localises to the membrane. Functionally, may play a role in protection against oxidative stress. This chain is Transmembrane protein 161A (tmem161a), found in Xenopus laevis (African clawed frog).